The primary structure comprises 248 residues: Clathrin light chain A (248 aa).

Residues Met1–Ser93 are disordered. The segment covering Ala13–Gly25 has biased composition (gly residues). Positions Val100–Arg162 are involved in binding clathrin heavy chain. A phosphoserine mark is found at Ser105 and Ser206. Position 223 is an N6-acetyllysine (Lys223). Ser236 bears the Phosphoserine mark. An N6-acetyllysine modification is found at Lys242.

Belongs to the clathrin light chain family. Clathrin coats are formed from molecules containing 3 heavy chains and 3 light chains. Interacts with CALY; the interaction stimulates clathrin self-assembly and clathrin-mediated endocytosis. Interacts with CKAP5 and TACC3 forming the TACC3/ch-TOG/clathrin complex located at spindle inter-microtubules bridges; the complex implicates clathrin triskelions.

It is found in the cytoplasmic vesicle membrane. It localises to the membrane. The protein localises to the coated pit. The protein resides in the cytoplasm. Its subcellular location is the cytoskeleton. It is found in the spindle. In terms of biological role, clathrin is the major protein of the polyhedral coat of coated pits and vesicles. Acts as a component of the TACC3/ch-TOG/clathrin complex proposed to contribute to stabilization of kinetochore fibers of the mitotic spindle by acting as inter-microtubule bridge. The protein is Clathrin light chain A (Clta) of Rattus norvegicus (Rat).